The chain runs to 348 residues: tRNA (cytosine(34)-C(5))-methyltransferase, mitochondrial (348 aa).

Residues 139 to 145, glutamate 162, aspartate 193, and aspartate 211 each bind S-adenosyl-L-methionine; that span reads CAAPGGK. Residue cysteine 265 is the Nucleophile of the active site.

The protein belongs to the class I-like SAM-binding methyltransferase superfamily. RsmB/NOP family.

It is found in the mitochondrion matrix. The enzyme catalyses cytidine(34) in mitochondrial tRNA + S-adenosyl-L-methionine = 5-methylcytidine(34) in mitochondrial tRNA + S-adenosyl-L-homocysteine + H(+). Mitochondrial tRNA methyltransferase that mediates methylation of cytosine to 5-methylcytosine (m5C) at position 34 of mt-tRNA(Met). mt-tRNA(Met) methylation at cytosine(34) takes place at the wobble position of the anticodon and initiates the formation of 5-formylcytosine (f(5)c) at this position. mt-tRNA(Met) containing the f(5)c modification at the wobble position enables recognition of the AUA codon in addition to the AUG codon, expanding codon recognition in mitochondrial translation. This chain is tRNA (cytosine(34)-C(5))-methyltransferase, mitochondrial, found in Mus musculus (Mouse).